The primary structure comprises 26 residues: DEAD-box ATP-dependent RNA helicase 1 (26 aa).

The short motif at 1–10 (RELLMGIFEK) is the Q motif element. Residue 11 to 16 (NGTGKT) coordinates ATP. In terms of domain architecture, Helicase ATP-binding spans 11 to 26 (NGTGKTAAFVIPLLQK).

Belongs to the DEAD box helicase family. DDX6/DHH1 subfamily.

It is found in the cytoplasm. Its subcellular location is the P-body. It carries out the reaction ATP + H2O = ADP + phosphate + H(+). Functionally, ATP-dependent RNA helicase involved in mRNA turnover, and more specifically in mRNA decapping. The protein is DEAD-box ATP-dependent RNA helicase 1 of Catharanthus roseus (Madagascar periwinkle).